The chain runs to 305 residues: MRIVILDELLSREMDGSNDGSSARVNSLKHVIKRNKMDMADDAPSSLDLMRRIFQAEISREIHQIMERHTRTTLLPAIENLRKNGHVVDESVLNGLYCNILEAAKKPYQKDPEPMPPICTNGNGFLDINSQEHENNLKRGYESDSSDVSGVSHCSDAKRRRGRPRKDEEAYRLEMTPPTMNEVIRWNPDRIDVNTRFITATKIAQVMGMPPSILFNKYPRMFRYSCDEDDKNILHEQNLLIRAPGRCYLLVAEDARQLVPSTYFQDVLNVSFLISEPLLSKIRQKAASTYEKYKVFLPTQPNNYL.

The segment at 138-168 is disordered; that stretch reads KRGYESDSSDVSGVSHCSDAKRRRGRPRKDE. The segment at residues 158 to 170 is a DNA-binding region (a.T hook); it reads KRRRGRPRKDEEA.

In terms of assembly, interacts with phosphorylated egl-4. May interact with itself. May be a component of a histone deacetylase complex containing saeg-2, saeg-1 and hda-2. As to expression, ubiquitously expressed.

It is found in the nucleus. As a likely component of a histone deacetylase complex, together with saeg-1 and hda-2, functions downstream of the cAMP-dependent kinase egl-4 to regulate the expression of genes required for egg-laying and foraging. This is Suppressor of activated egl-4 protein 2 from Caenorhabditis elegans.